The primary structure comprises 183 residues: Neuroblastoma suppressor of tumorigenicity 1 (183 aa).

An N-terminal signal peptide occupies residues 1-19 (MVMCVRAVLVCVLLELSRA). Intrachain disulfides connect cysteine 38–cysteine 88, cysteine 52–cysteine 102, cysteine 62–cysteine 121, cysteine 66–cysteine 123, and cysteine 85–cysteine 126. Residues 38–127 (CEAKNITQIV…ILHCSCQSCS (90 aa)) form the CTCK domain. The disordered stretch occupies residues 145-170 (AQDLPSLPDATHTHPQHAHMQADQRD).

The protein belongs to the DAN family.

It is found in the secreted. Functionally, may act as a tumor suppressor. The polypeptide is Neuroblastoma suppressor of tumorigenicity 1 (nbl1) (Danio rerio (Zebrafish)).